Consider the following 631-residue polypeptide: BTB/POZ domain-containing protein At1g67900 (631 aa).

Residues 28–93 (SDFTIEVSGS…CYGITITISA (66 aa)) enclose the BTB domain. The region spanning 200-509 (GWWAEDIAEL…VQVLFYEQAR (310 aa)) is the NPH3 domain. The interval 361-399 (QTSPPTSPLRGKKGMMDRRRRSRSAENIDLEFQESRRSS) is disordered. Residues 370 to 382 (RGKKGMMDRRRRS) are compositionally biased toward basic residues. Phosphotyrosine is present on tyrosine 450. Serine 567 carries the phosphoserine modification.

It belongs to the NPH3 family.

Its pathway is protein modification; protein ubiquitination. May act as a substrate-specific adapter of an E3 ubiquitin-protein ligase complex (CUL3-RBX1-BTB) which mediates the ubiquitination and subsequent proteasomal degradation of target proteins. In Arabidopsis thaliana (Mouse-ear cress), this protein is BTB/POZ domain-containing protein At1g67900.